The chain runs to 628 residues: tRNA uridine 5-carboxymethylaminomethyl modification enzyme MnmG (628 aa).

Residue 13–18 (GAGHAG) coordinates FAD. Residue 281–295 (GARYCPSIEDKIKKF) coordinates NAD(+).

This sequence belongs to the MnmG family. As to quaternary structure, homodimer. Heterotetramer of two MnmE and two MnmG subunits. FAD is required as a cofactor.

It is found in the cytoplasm. NAD-binding protein involved in the addition of a carboxymethylaminomethyl (cmnm) group at the wobble position (U34) of certain tRNAs, forming tRNA-cmnm(5)s(2)U34. This chain is tRNA uridine 5-carboxymethylaminomethyl modification enzyme MnmG, found in Treponema denticola (strain ATCC 35405 / DSM 14222 / CIP 103919 / JCM 8153 / KCTC 15104).